A 78-amino-acid chain; its full sequence is Large ribosomal subunit protein eL20 (78 aa).

The protein belongs to the eukaryotic ribosomal protein eL20 family. As to quaternary structure, part of the 50S ribosomal subunit. Binds 23S rRNA.

The sequence is that of Large ribosomal subunit protein eL20 from Methanothermobacter thermautotrophicus (strain ATCC 29096 / DSM 1053 / JCM 10044 / NBRC 100330 / Delta H) (Methanobacterium thermoautotrophicum).